The primary structure comprises 40 residues: Photosystem II reaction center protein J (40 aa).

The chain crosses the membrane as a helical span at residues 8–28; that stretch reads IPLWVIGTVAGILVIGIIGIF.

Belongs to the PsbJ family. In terms of assembly, PSII is composed of 1 copy each of membrane proteins PsbA, PsbB, PsbC, PsbD, PsbE, PsbF, PsbH, PsbI, PsbJ, PsbK, PsbL, PsbM, PsbT, PsbX, PsbY, PsbZ, Psb30/Ycf12, at least 3 peripheral proteins of the oxygen-evolving complex and a large number of cofactors. It forms dimeric complexes.

It localises to the plastid. The protein localises to the chloroplast thylakoid membrane. Functionally, one of the components of the core complex of photosystem II (PSII). PSII is a light-driven water:plastoquinone oxidoreductase that uses light energy to abstract electrons from H(2)O, generating O(2) and a proton gradient subsequently used for ATP formation. It consists of a core antenna complex that captures photons, and an electron transfer chain that converts photonic excitation into a charge separation. The protein is Photosystem II reaction center protein J of Lobularia maritima (Sweet alyssum).